A 715-amino-acid chain; its full sequence is Protein psiH (715 aa).

The first 20 residues, 1 to 20 (MNYLKPTIFLILCLVTFVYS), serve as a signal peptide directing secretion. The Extracellular segment spans residues 21–651 (QPSTLTIQGT…ICKTGAVVST (631 aa)). The 142-residue stretch at 115-256 (NYDSKKQVYV…YDYCGVCSGD (142 aa)) folds into the PA14 domain. N-linked (GlcNAc...) asparagine glycans are attached at residues Asn-149, Asn-377, Asn-528, and Asn-622. The chain crosses the membrane as a helical span at residues 652-672 (AVIAGVTVAGAVALGVFIYGG). The Cytoplasmic portion of the chain corresponds to 673–715 (KRGYDYWKESRNVQFSGSNSNPLYEQNPNGSGVNPLYNDNSAL). The interval 690–715 (SNSNPLYEQNPNGSGVNPLYNDNSAL) is disordered.

It belongs to the prespore-cell-inducing factor family.

The protein resides in the membrane. This chain is Protein psiH (psiH), found in Dictyostelium discoideum (Social amoeba).